Consider the following 314-residue polypeptide: Melanoma-associated antigen 12 (314 aa).

The segment covering 1 to 14 (MPLEQRSQHCKPEE) has biased composition (basic and acidic residues). The disordered stretch occupies residues 1-72 (MPLEQRSQHC…HSPQGASTLP (72 aa)). The segment covering 17 to 44 (EAQGEALGLVGAQAPATEEQETASSSST) has biased composition (low complexity). The region spanning 109 to 308 (LSRKMAELVH…ISYPPLHEWA (200 aa)) is the MAGE domain.

Expressed in many tumors of several types, such as melanoma, head and neck squamous cell carcinoma, lung carcinoma and breast carcinoma, but not in normal tissues except for testes.

Not known, though may play a role tumor transformation or progression. In vitro promotes cell viability in melanoma cell lines. The chain is Melanoma-associated antigen 12 (MAGEA12) from Homo sapiens (Human).